The primary structure comprises 87 residues: Small ribosomal subunit protein uS17 (87 aa).

Belongs to the universal ribosomal protein uS17 family. In terms of assembly, part of the 30S ribosomal subunit.

Functionally, one of the primary rRNA binding proteins, it binds specifically to the 5'-end of 16S ribosomal RNA. In Macrococcus caseolyticus (strain JCSC5402) (Macrococcoides caseolyticum), this protein is Small ribosomal subunit protein uS17.